A 159-amino-acid chain; its full sequence is 2-C-methyl-D-erythritol 2,4-cyclodiphosphate synthase (159 aa).

2 residues coordinate a divalent metal cation: Asp10 and His12. 4-CDP-2-C-methyl-D-erythritol 2-phosphate contacts are provided by residues 10–12 (DVH) and 36–37 (HS). His44 is an a divalent metal cation binding site. Residues 58-60 (DIG), 63-67 (FPDTD), 102-108 (AQAPKMA), 134-137 (TTTE), Phe141, and Arg144 each bind 4-CDP-2-C-methyl-D-erythritol 2-phosphate.

It belongs to the IspF family. Homotrimer. The cofactor is a divalent metal cation.

It catalyses the reaction 4-CDP-2-C-methyl-D-erythritol 2-phosphate = 2-C-methyl-D-erythritol 2,4-cyclic diphosphate + CMP. The protein operates within isoprenoid biosynthesis; isopentenyl diphosphate biosynthesis via DXP pathway; isopentenyl diphosphate from 1-deoxy-D-xylulose 5-phosphate: step 4/6. Its function is as follows. Involved in the biosynthesis of isopentenyl diphosphate (IPP) and dimethylallyl diphosphate (DMAPP), two major building blocks of isoprenoid compounds. Catalyzes the conversion of 4-diphosphocytidyl-2-C-methyl-D-erythritol 2-phosphate (CDP-ME2P) to 2-C-methyl-D-erythritol 2,4-cyclodiphosphate (ME-CPP) with a corresponding release of cytidine 5-monophosphate (CMP). This is 2-C-methyl-D-erythritol 2,4-cyclodiphosphate synthase from Idiomarina loihiensis (strain ATCC BAA-735 / DSM 15497 / L2-TR).